The sequence spans 227 residues: 2,3-bisphosphoglycerate-dependent phosphoglycerate mutase (227 aa).

Substrate-binding positions include 7–14, 20–21, R59, 86–89, K97, 113–114, and 182–183; these read RHGFSEWN, TG, ERHY, RR, and GN. H8 serves as the catalytic Tele-phosphohistidine intermediate. Residue E86 is the Proton donor/acceptor of the active site.

This sequence belongs to the phosphoglycerate mutase family. BPG-dependent PGAM subfamily. Homodimer.

The enzyme catalyses (2R)-2-phosphoglycerate = (2R)-3-phosphoglycerate. It functions in the pathway carbohydrate degradation; glycolysis; pyruvate from D-glyceraldehyde 3-phosphate: step 3/5. Functionally, catalyzes the interconversion of 2-phosphoglycerate and 3-phosphoglycerate. In Pasteurella multocida (strain Pm70), this protein is 2,3-bisphosphoglycerate-dependent phosphoglycerate mutase.